The primary structure comprises 83 residues: MKASMFLALAGLVLLFVVGYASESEEKEFPIELLSKIFAVDVFKGEDRGCKGFGDSCTPGKNECCPNHACSNKHKWCKVYLGK.

The first 21 residues, 1–21 (MKASMFLALAGLVLLFVVGYA), serve as a signal peptide directing secretion. A propeptide spanning residues 22–48 (SESEEKEFPIELLSKIFAVDVFKGEDR) is cleaved from the precursor. 3 disulfides stabilise this stretch: cysteine 50-cysteine 65, cysteine 57-cysteine 70, and cysteine 64-cysteine 77. Leucine 81 bears the Leucine amide mark.

Belongs to the neurotoxin 10 (Hwtx-1) family. 15 (Hntx-3) subfamily. In terms of assembly, monomer. Expressed by the venom gland.

It localises to the secreted. Lethal neurotoxin. Selectively blocks tetrodotoxin-sensitive voltage-gated sodium channels (Nav). Does not affect tetrodotoxin-resistant voltage-gated sodium channels or calcium channels. The protein is Mu-theraphotoxin-Hhn2j 2 of Cyriopagopus hainanus (Chinese bird spider).